The sequence spans 248 residues: Ribosomal RNA small subunit methyltransferase G (248 aa).

S-adenosyl-L-methionine-binding positions include Gly93, Leu98, 143-144, and Arg161; that span reads AE.

Belongs to the methyltransferase superfamily. RNA methyltransferase RsmG family.

It localises to the cytoplasm. Its function is as follows. Specifically methylates the N7 position of guanine in position 518 of 16S rRNA. In Mycobacterium leprae (strain Br4923), this protein is Ribosomal RNA small subunit methyltransferase G.